Consider the following 386-residue polypeptide: Succinate--CoA ligase [ADP-forming] subunit beta (386 aa).

Residues 9-244 (KDLLTSYQLP…PSQENIRDVL (236 aa)) form the ATP-grasp domain. ATP contacts are provided by residues Lys46, 53–55 (GRG), Val102, and Glu107. 2 residues coordinate Mg(2+): Asn199 and Asp213. Residues Asn264 and 321 to 323 (GIM) each bind substrate.

It belongs to the succinate/malate CoA ligase beta subunit family. As to quaternary structure, heterotetramer of two alpha and two beta subunits. It depends on Mg(2+) as a cofactor.

It carries out the reaction succinate + ATP + CoA = succinyl-CoA + ADP + phosphate. It catalyses the reaction GTP + succinate + CoA = succinyl-CoA + GDP + phosphate. It functions in the pathway carbohydrate metabolism; tricarboxylic acid cycle; succinate from succinyl-CoA (ligase route): step 1/1. Its function is as follows. Succinyl-CoA synthetase functions in the citric acid cycle (TCA), coupling the hydrolysis of succinyl-CoA to the synthesis of either ATP or GTP and thus represents the only step of substrate-level phosphorylation in the TCA. The beta subunit provides nucleotide specificity of the enzyme and binds the substrate succinate, while the binding sites for coenzyme A and phosphate are found in the alpha subunit. The chain is Succinate--CoA ligase [ADP-forming] subunit beta from Chlamydia muridarum (strain MoPn / Nigg).